The sequence spans 418 residues: Elongation factor Tu, chloroplastic (418 aa).

A tr-type G domain is found at 10 to 214; sequence KPHVNIGTIG…NVDSYIPTPQ (205 aa). The interval 19–26 is G1; sequence GHVDHGKT. Position 19-26 (19-26) interacts with GTP; sequence GHVDHGKT. Threonine 26 provides a ligand contact to Mg(2+). A G2 region spans residues 60-64; the sequence is GITIN. Positions 81–84 are G3; that stretch reads DCPG. GTP-binding positions include 81–85 and 136–139; these read DCPGH and NKED. Residues 136–139 are G4; that stretch reads NKED. Residues 174 to 176 are G5; the sequence is SAL.

It belongs to the TRAFAC class translation factor GTPase superfamily. Classic translation factor GTPase family. EF-Tu/EF-1A subfamily.

The protein localises to the plastid. Its subcellular location is the chloroplast. The enzyme catalyses GTP + H2O = GDP + phosphate + H(+). Functionally, GTP hydrolase that promotes the GTP-dependent binding of aminoacyl-tRNA to the A-site of ribosomes during protein biosynthesis. In Chlamydomonas reinhardtii (Chlamydomonas smithii), this protein is Elongation factor Tu, chloroplastic (tufA).